Here is a 521-residue protein sequence, read N- to C-terminus: Vang-like protein 2 (521 aa).

Residues 1–81 (MDTESQYSGY…TTVVTGTSEH (81 aa)) are disordered. At 1–108 (MDTESQYSGY…VPLDCSRHLG (108 aa)) the chain is on the cytoplasmic side. Basic residues predominate over residues 15 to 33 (GHSRSSRKHRDRRDRHRSK). Over residues 57 to 67 (ESTRGDERDDN) the composition is skewed to basic and acidic residues. The span at 69-81 (GETTTVVTGTSEH) shows a compositional bias: low complexity. A helical transmembrane segment spans residues 109–129 (VAAGAILALLSFLTPLAFLLL). Residues 130–147 (PPLLWREELEPCGTACEG) lie on the Extracellular side of the membrane. A helical transmembrane segment spans residues 148–168 (LFISVAFKLLILLLGSWALFF). The Cytoplasmic segment spans residues 169-178 (RRPKASLPRV). The chain crosses the membrane as a helical span at residues 179 to 199 (FVLRALLMVLVFLLVISYWLF). Over 200-217 (YGVRILDARERSYQGVVQ) the chain is Extracellular. A helical membrane pass occupies residues 218–238 (FAVSLVDALLFVHYLAVVLLE). Topologically, residues 239–521 (LRQLQPQFTL…VMRLQSETSV (283 aa)) are cytoplasmic.

This sequence belongs to the Vang family. As to quaternary structure, homodimer and heterodimer with Vangl1. Interacts through its C-terminal region with the N-terminal half of DVL1, DVL2 and DVL3. The PDZ domain of DVL1, DVL2 and DVL3 is required for the interaction. Variants Glu-255 and Asn-464 impair interaction with the DVL proteins. Also interacts with the PDZ domains of MAGI3, SCRIB/SCRB1 and FZD3. Interacts with PRICKLE3. As to expression, primarily expressed in the brain and epididymis. Not detected in the cochlea of Lp mice.

The protein resides in the cell membrane. Its function is as follows. Involved in the control of early morphogenesis and patterning of both axial midline structures and the development of neural plate. Plays a role in the regulation of planar cell polarity, particularly in the orientation of stereociliary bundles in the cochlea. Required for polarization and movement of myocardializing cells in the outflow tract and seems to act via RHOA signaling to regulate this process. Required for cell surface localization of FZD3 and FZD6 in the inner ear. This Mus musculus (Mouse) protein is Vang-like protein 2 (Vangl2).